We begin with the raw amino-acid sequence, 293 residues long: Nucleotide-binding protein CKR_3143 (293 aa).

8–15 (GLSGAGKT) contacts ATP. 59 to 62 (DIRG) is a binding site for GTP.

It belongs to the RapZ-like family.

Its function is as follows. Displays ATPase and GTPase activities. This is Nucleotide-binding protein CKR_3143 from Clostridium kluyveri (strain NBRC 12016).